The chain runs to 566 residues: Oxygen-dependent choline dehydrogenase (566 aa).

Residue 7–36 (DYIICGAGSAGNVLATRLTEDPNVTVLLLE) participates in FAD binding. The interval 185-204 (EGFGPMDRTVTPKGRRASTA) is disordered. H474 (proton acceptor) is an active-site residue.

The protein belongs to the GMC oxidoreductase family. The cofactor is FAD.

The enzyme catalyses choline + A = betaine aldehyde + AH2. It carries out the reaction betaine aldehyde + NAD(+) + H2O = glycine betaine + NADH + 2 H(+). It participates in amine and polyamine biosynthesis; betaine biosynthesis via choline pathway; betaine aldehyde from choline (cytochrome c reductase route): step 1/1. Involved in the biosynthesis of the osmoprotectant glycine betaine. Catalyzes the oxidation of choline to betaine aldehyde and betaine aldehyde to glycine betaine at the same rate. This chain is Oxygen-dependent choline dehydrogenase, found in Burkholderia vietnamiensis (strain G4 / LMG 22486) (Burkholderia cepacia (strain R1808)).